The primary structure comprises 201 residues: Hydroxymethylphosphonate dioxygenase (201 aa).

6 residues coordinate Fe cation: His-47, His-71, Asp-72, His-94, His-117, and Asp-174.

Requires Fe(2+) as cofactor.

The enzyme catalyses hydroxymethylphosphonate + O2 = formate + phosphate + 2 H(+). It catalyses the reaction (1R)-(2-amino-1-hydroxyethyl)phosphonate + O2 = glycine + phosphate + 2 H(+). It carries out the reaction (1R)-(1-hydroxyethyl)phosphonate + O2 = acetate + phosphate + 2 H(+). Part of an oxidative pathway for utilization of methylphosphonic acid as a phosphate source. Catalyzes the oxidation of hydroxymethylphosphonic acid to produce formate and phosphate. Can also use (1R)-(2-amino-1-hydroxyethyl)phosphonic acid and (R)-1-hydroxyethylphosphonic acid with similar catalytic efficiency. The chain is Hydroxymethylphosphonate dioxygenase from Gimesia maris (strain ATCC 29201 / DSM 8797 / 534-30) (Planctomyces maris).